We begin with the raw amino-acid sequence, 76 residues long: Large ribosomal subunit protein eL20 (76 aa).

This sequence belongs to the eukaryotic ribosomal protein eL20 family. As to quaternary structure, part of the 50S ribosomal subunit. Binds 23S rRNA.

This Methanococcus maripaludis (strain DSM 14266 / JCM 13030 / NBRC 101832 / S2 / LL) protein is Large ribosomal subunit protein eL20.